Here is a 295-residue protein sequence, read N- to C-terminus: Pyridoxal 5'-phosphate synthase subunit PdxS (295 aa).

Aspartate 25 contacts D-ribose 5-phosphate. The active-site Schiff-base intermediate with D-ribose 5-phosphate is lysine 82. Glycine 154 is a binding site for D-ribose 5-phosphate. Position 166 (arginine 166) interacts with D-glyceraldehyde 3-phosphate. D-ribose 5-phosphate-binding positions include glycine 215 and 236-237; that span reads GS.

Belongs to the PdxS/SNZ family. As to quaternary structure, in the presence of PdxT, forms a dodecamer of heterodimers.

It catalyses the reaction aldehydo-D-ribose 5-phosphate + D-glyceraldehyde 3-phosphate + L-glutamine = pyridoxal 5'-phosphate + L-glutamate + phosphate + 3 H2O + H(+). It participates in cofactor biosynthesis; pyridoxal 5'-phosphate biosynthesis. Its function is as follows. Catalyzes the formation of pyridoxal 5'-phosphate from ribose 5-phosphate (RBP), glyceraldehyde 3-phosphate (G3P) and ammonia. The ammonia is provided by the PdxT subunit. Can also use ribulose 5-phosphate and dihydroxyacetone phosphate as substrates, resulting from enzyme-catalyzed isomerization of RBP and G3P, respectively. This is Pyridoxal 5'-phosphate synthase subunit PdxS from Bacillus cytotoxicus (strain DSM 22905 / CIP 110041 / 391-98 / NVH 391-98).